A 420-amino-acid polypeptide reads, in one-letter code: uncharacterized protein (420 aa).

6 helical membrane passes run 26–46, 66–86, 231–251, 276–296, 317–337, and 369–389; these read IFLL…QSVI, SAIK…WFTF, VILA…ATVL, IPVN…PSLL, GFLV…SIAF, and IDIL…FLTI.

This sequence belongs to the CbiQ family.

It is found in the cell membrane. This is an uncharacterized protein from Mycoplasma genitalium (strain ATCC 33530 / DSM 19775 / NCTC 10195 / G37) (Mycoplasmoides genitalium).